Consider the following 200-residue polypeptide: GTP cyclohydrolase-2 (200 aa).

Arginine 50–glutamate 54 serves as a coordination point for GTP. Positions 55, 66, and 68 each coordinate Zn(2+). GTP-binding positions include glutamine 71, glutamate 93 to arginine 95, and threonine 115. Aspartate 127 (proton acceptor) is an active-site residue. Arginine 129 functions as the Nucleophile in the catalytic mechanism. GTP-binding residues include threonine 150 and lysine 155.

This sequence belongs to the GTP cyclohydrolase II family. The cofactor is Zn(2+).

The catalysed reaction is GTP + 4 H2O = 2,5-diamino-6-hydroxy-4-(5-phosphoribosylamino)-pyrimidine + formate + 2 phosphate + 3 H(+). Its pathway is cofactor biosynthesis; riboflavin biosynthesis; 5-amino-6-(D-ribitylamino)uracil from GTP: step 1/4. In terms of biological role, catalyzes the conversion of GTP to 2,5-diamino-6-ribosylamino-4(3H)-pyrimidinone 5'-phosphate (DARP), formate and pyrophosphate. This chain is GTP cyclohydrolase-2, found in Acinetobacter baumannii (strain AB0057).